Here is a 156-residue protein sequence, read N- to C-terminus: Probable succinate transporter subunit YjjB (156 aa).

The next 4 helical transmembrane spans lie at 7–27, 54–74, 86–106, and 128–148; these read WALLQDMVLAAIPALGFAMVF, FGMDIEPASLLASIMIGMIGI, VFTVAAVIPMFPGISAYTAMI, and FLKASFIVGSLSIGLSLPGLW.

It belongs to the ThrE exporter (TC 2.A.79) family. In terms of assembly, the transporter is composed of YjjB and YjjP.

It is found in the cell inner membrane. In terms of biological role, involved in succinate export with YjjP. Both proteins are required for export. The sequence is that of Probable succinate transporter subunit YjjB from Yersinia enterocolitica serotype O:8 / biotype 1B (strain NCTC 13174 / 8081).